Here is a 2210-residue protein sequence, read N- to C-terminus: Filamin-A (2210 aa).

Calponin-homology (CH) domains are found at residues Lys15–Ser120 and His139–Leu242. Filamin repeat units follow at residues Arg249–Val347, Gly349–Val447, Ala448–Val544, Gly545–Ile635, Arg638–Val734, Gly735–Glu831, Gln832–Val929, Lys930–Val1022, Glu1023–Val1121, Phe1122–Ala1217, Phe1218–Ala1312, Ser1322–Val1423, Asp1424–Ile1515, Thr1516–Val1603, Arg1606–Val1698, Ala1699–Val1796, Leu1799–Val1891, Pro1893–Val1986, Lys1988–Ala2079, and Thr2116–Val2210.

It belongs to the filamin family. In terms of assembly, interacts with Ten-m. As to expression, germline-specific in females (at protein level). Expressed in ovary.

It is found in the cytoplasm. It localises to the cytoskeleton. The protein localises to the cell membrane. In terms of biological role, involved in the germline ring canal formation. May tether actin microfilament within the ovarian ring canal to the cell membrane. Contributes to actin microfilaments organization. The polypeptide is Filamin-A (cher) (Drosophila melanogaster (Fruit fly)).